Reading from the N-terminus, the 308-residue chain is tRNA dimethylallyltransferase (308 aa).

16 to 23 (GPTASGKT) provides a ligand contact to ATP. Position 18-23 (18-23 (TASGKT)) interacts with substrate. Positions 41–44 (DSQQ) are interaction with substrate tRNA.

This sequence belongs to the IPP transferase family. In terms of assembly, monomer. Requires Mg(2+) as cofactor.

The enzyme catalyses adenosine(37) in tRNA + dimethylallyl diphosphate = N(6)-dimethylallyladenosine(37) in tRNA + diphosphate. Functionally, catalyzes the transfer of a dimethylallyl group onto the adenine at position 37 in tRNAs that read codons beginning with uridine, leading to the formation of N6-(dimethylallyl)adenosine (i(6)A). The protein is tRNA dimethylallyltransferase of Myxococcus xanthus (strain DK1622).